The chain runs to 429 residues: Glutamate-1-semialdehyde 2,1-aminomutase (429 aa).

An N6-(pyridoxal phosphate)lysine modification is found at Lys-267.

It belongs to the class-III pyridoxal-phosphate-dependent aminotransferase family. HemL subfamily. As to quaternary structure, homodimer. It depends on pyridoxal 5'-phosphate as a cofactor.

The protein localises to the cytoplasm. It carries out the reaction (S)-4-amino-5-oxopentanoate = 5-aminolevulinate. It participates in porphyrin-containing compound metabolism; protoporphyrin-IX biosynthesis; 5-aminolevulinate from L-glutamyl-tRNA(Glu): step 2/2. This chain is Glutamate-1-semialdehyde 2,1-aminomutase, found in Xanthomonas campestris pv. campestris (strain 8004).